Consider the following 372-residue polypeptide: N-methyl-L-tryptophan oxidase (372 aa).

An FAD-binding site is contributed by 4-34; that stretch reads DLIIIGSGSVGAAAGYYATRAGLNVLMTDAH. Residue cysteine 308 is modified to S-8alpha-FAD cysteine.

Belongs to the MSOX/MTOX family. MTOX subfamily. Monomer. It depends on FAD as a cofactor.

The catalysed reaction is N(alpha)-methyl-L-tryptophan + O2 + H2O = L-tryptophan + formaldehyde + H2O2. Functionally, catalyzes the oxidative demethylation of N-methyl-L-tryptophan. This Shigella boydii serotype 18 (strain CDC 3083-94 / BS512) protein is N-methyl-L-tryptophan oxidase.